The sequence spans 103 residues: Large ribosomal subunit protein bL21 (103 aa).

It belongs to the bacterial ribosomal protein bL21 family. As to quaternary structure, part of the 50S ribosomal subunit. Contacts protein L20.

Functionally, this protein binds to 23S rRNA in the presence of protein L20. This chain is Large ribosomal subunit protein bL21, found in Burkholderia ambifaria (strain MC40-6).